Here is a 111-residue protein sequence, read N- to C-terminus: Nucleoid-associated protein Fphi_0115 (111 aa).

Residues 1-27 (MNFDMSKLMQQAQKMQEQMKKAQQERE) form a disordered region. Basic and acidic residues predominate over residues 17-27 (EQMKKAQQERE).

The protein belongs to the YbaB/EbfC family. Homodimer.

It is found in the cytoplasm. It localises to the nucleoid. Functionally, binds to DNA and alters its conformation. May be involved in regulation of gene expression, nucleoid organization and DNA protection. The protein is Nucleoid-associated protein Fphi_0115 of Francisella philomiragia subsp. philomiragia (strain ATCC 25017 / CCUG 19701 / FSC 153 / O#319-036).